The sequence spans 286 residues: uncharacterized protein (286 aa).

The protein belongs to the methyltransferase superfamily.

Its function is as follows. Involved in osmoadaptation. This is an uncharacterized protein from Emericella nidulans (strain FGSC A4 / ATCC 38163 / CBS 112.46 / NRRL 194 / M139) (Aspergillus nidulans).